A 511-amino-acid chain; its full sequence is MLNLTLKPGHISLNELRQVSRSPVNLTLDPEAIPGIEESTQVVDRVIAEDRTVYGINTGFGLLANTRIAPEDLETLQRSIVLSHAAGIGKFMSDETVRLMMVLKINSLARGFSGIRLKVINMLIDLVNAQVYPCVPQKGSVGASGDLAPLAHMSTVLLGEGQARHNGQIVSGYEALKIAGLEPITLAPKEGLALLNGTQASTAFALEGLFIAEDLFASATVCGAMSVEAALGSRRPFDPRIHRVRGHRSTMDAAMAYRHLLDTSSEIGESHTNCEKVQDPYSLRCQPQVMGACLQQIRNSAEVLQVEANSVSDNPLVFAEDNDIISGGNFHAEPVAMAADNLALAIAEIGSLSERRMALLIDSALSKLPPFLVDNGGVNSGFMIAQVTSAALASENKTLAHPASVDSLPTSANQEDHVSMATFAARRLKEMGENTRGILAVEYLSAAQGLDFRAPNKSSERIEIAKQMLREKVSFYDKDRYFAPDIEQANTLLKLALHNALMPENLLPSVH.

Positions 143-145 (ASG) form a cross-link, 5-imidazolinone (Ala-Gly). Position 144 is a 2,3-didehydroalanine (Ser) (S144).

Belongs to the PAL/histidase family. Contains an active site 4-methylidene-imidazol-5-one (MIO), which is formed autocatalytically by cyclization and dehydration of residues Ala-Ser-Gly.

The protein resides in the cytoplasm. The catalysed reaction is L-histidine = trans-urocanate + NH4(+). The protein operates within amino-acid degradation; L-histidine degradation into L-glutamate; N-formimidoyl-L-glutamate from L-histidine: step 1/3. The polypeptide is Histidine ammonia-lyase (Vibrio parahaemolyticus serotype O3:K6 (strain RIMD 2210633)).